The sequence spans 1016 residues: MSQGPPTGESSEPEAKVLHTKRLYRAVVEAVHRLDLILCNKTAYQEVFKPENISLRNKLRELCVKLMFLHPVDYGRKAEELLWRKVYYEVIQLIKTNKKHIHSRSTLECAYRTHLVAGIGFYQHLLLYIQSHYQLELQCCIDWTHVTDPLIGCKKPVSASGKEMDWAQMACHRCLVYLGDLSRYQNELAGVDTELLAERFYYQALSVAPQIGMPFNQLGTLAGSKYYNVEAMYCYLRCIQSEVSFEGAYGNLKRLYDKAAKMYHQLKKCETRKLSPGKKRCKDIKRLLVNFMYLQSLLQPKSSSVDSELTSLCQSVLEDFNLCLFYLPSSPNLSLASEDEEEYESGYAFLPDLLIFQMVIICLMCVHSLERAGSKQYSAAIAFTLALFSHLVNHVNIRLQAELEEGENPVPAFQSDGTDEPESKEPVEKEEEPDPEPPPVTPQVGEGRKSRKFSRLSCLRRRRHPPKVGDDSDLSEGFESDSSHDSARASEGSDSGSDKSLEGGGTAFDAETDSEMNSQESRSDLEDMEEEEGTRSPTLEPPRGRSEAPDSLNGPLGPSEASIASNLQAMSTQMFQTKRCFRLAPTFSNLLLQPTTNPHTSASHRPCVNGDVDKPSEPASEEGSESEGSESSGRSCRNERSIQEKLQVLMAEGLLPAVKVFLDWLRTNPDLIIVCAQSSQSLWNRLSVLLNLLPAAGELQESGLALCPEVQDLLEGCELPDLPSSLLLPEDMALRNLPPLRAAHRRFNFDTDRPLLSTLEESVVRICCIRSFGHFIARLQGSILQFNPEVGIFVSIAQSEQESLLQQAQAQFRMAQEEARRNRLMRDMAQLRLQLEVSQLEGSLQQPKAQSAMSPYLVPDTQALCHHLPVIRQLATSGRFIVIIPRTVIDGLDLLKKEHPGARDGIRYLEAEFKKGNRYIRCQKEVGKSFERHKLKRQDADAWTLYKILDSCKQLTLAQGAGEEDPSGMVTIITGLPLDNPSVLSGPMQAALQAAAHASVDIKNVLDFYKQWKEIG.

Ser-2 is subject to N-acetylserine. A phosphoserine mark is found at Ser-2 and Ser-423. Disordered regions lie at residues 408-561 and 594-637; these read NPVP…PSEA and PTTN…RSCR. Residues 449–466 are compositionally biased toward basic residues; the sequence is KSRKFSRLSCLRRRRHPP. Residues 594–603 are compositionally biased toward polar residues; the sequence is PTTNPHTSAS. Positions 619 to 628 are enriched in acidic residues; the sequence is ASEEGSESEG. Positions 798-841 form a coiled coil; sequence QSEQESLLQQAQAQFRMAQEEARRNRLMRDMAQLRLQLEVSQLE. Residues 872–995 enclose the PINc domain; that stretch reads RQLATSGRFI…GPMQAALQAA (124 aa).

As to quaternary structure, interacts with TERT, PPP2CA and SMG1. Part of a complex that contains SMG1, SMG5, SMG7, PPP2CA, a short isoform of UPF3A (isoform UPF3AS, but not isoform UPF3AL) and phosphorylated UPF1. Not detected in complexes that contain unphosphorylated UPF1. As to expression, ubiquitous.

The protein resides in the cytoplasm. It is found in the nucleus. In terms of biological role, plays a role in nonsense-mediated mRNA decay. Does not have RNase activity by itself. Promotes dephosphorylation of UPF1. Together with SMG7 is thought to provide a link to the mRNA degradation machinery involving exonucleolytic pathways, and to serve as an adapter for UPF1 to protein phosphatase 2A (PP2A), thereby triggering UPF1 dephosphorylation. Necessary for TERT activity. The sequence is that of Nonsense-mediated mRNA decay factor SMG5 from Homo sapiens (Human).